Here is a 304-residue protein sequence, read N- to C-terminus: Putative S-adenosyl-L-methionine-dependent methyltransferase MAP_4189c (304 aa).

S-adenosyl-L-methionine contacts are provided by residues D130 and D159–L160.

The protein belongs to the UPF0677 family.

Its function is as follows. Exhibits S-adenosyl-L-methionine-dependent methyltransferase activity. The protein is Putative S-adenosyl-L-methionine-dependent methyltransferase MAP_4189c of Mycolicibacterium paratuberculosis (strain ATCC BAA-968 / K-10) (Mycobacterium paratuberculosis).